Here is a 111-residue protein sequence, read N- to C-terminus: Nucleoid-associated protein PFL_1905 (111 aa).

2 disordered regions span residues 1–20 (MKGG…EKMA) and 88–111 (SNSQ…KLPF).

The protein belongs to the YbaB/EbfC family. In terms of assembly, homodimer.

It is found in the cytoplasm. Its subcellular location is the nucleoid. Binds to DNA and alters its conformation. May be involved in regulation of gene expression, nucleoid organization and DNA protection. In Pseudomonas fluorescens (strain ATCC BAA-477 / NRRL B-23932 / Pf-5), this protein is Nucleoid-associated protein PFL_1905.